We begin with the raw amino-acid sequence, 430 residues long: Asparagine--tRNA ligase (430 aa).

It belongs to the class-II aminoacyl-tRNA synthetase family. As to quaternary structure, homodimer.

It localises to the cytoplasm. It carries out the reaction tRNA(Asn) + L-asparagine + ATP = L-asparaginyl-tRNA(Asn) + AMP + diphosphate + H(+). This Shouchella clausii (strain KSM-K16) (Alkalihalobacillus clausii) protein is Asparagine--tRNA ligase.